The sequence spans 602 residues: Threonine--tRNA ligase (602 aa).

Positions D208–P499 are catalytic. Positions 300, 351, and 476 each coordinate Zn(2+).

Belongs to the class-II aminoacyl-tRNA synthetase family. As to quaternary structure, homodimer. Requires Zn(2+) as cofactor.

The protein resides in the cytoplasm. It carries out the reaction tRNA(Thr) + L-threonine + ATP = L-threonyl-tRNA(Thr) + AMP + diphosphate + H(+). In terms of biological role, catalyzes the attachment of threonine to tRNA(Thr) in a two-step reaction: L-threonine is first activated by ATP to form Thr-AMP and then transferred to the acceptor end of tRNA(Thr). Also edits incorrectly charged L-seryl-tRNA(Thr). The chain is Threonine--tRNA ligase from Campylobacter jejuni subsp. jejuni serotype O:23/36 (strain 81-176).